Reading from the N-terminus, the 294-residue chain is MKITRRPEWLQKKVSPAAHADMERLLGGLQLHTVCQEAHCPNISECFRQRQATFLILGKLCTRLCSFCNVTKQTPLAVDQAEPERVAAAVELLKLTHVVVTSPTRDDLADGGAALYAATVAAIRNASPQTKIELLVPDFAGNQESIAAVVSACPHILGHNLETVPRLYSIRSGADYRRSLLMLEMIRRLNPAMKTKTGLMLGLGETEEELFQALRDLRRVDCSYLSLGQYLAPSRSHYPVQDYPSPETFDRYREQALSMGFEHVESGPYVRSSYHAEHYGTGTGHAKLSPAPAD.

The [4Fe-4S] cluster site is built by cysteine 35, cysteine 40, cysteine 46, cysteine 61, cysteine 65, cysteine 68, and serine 273. One can recognise a Radical SAM core domain in the interval 47–262; it reads FRQRQATFLI…REQALSMGFE (216 aa).

The protein belongs to the radical SAM superfamily. Lipoyl synthase family. [4Fe-4S] cluster is required as a cofactor.

The protein localises to the cytoplasm. It carries out the reaction [[Fe-S] cluster scaffold protein carrying a second [4Fe-4S](2+) cluster] + N(6)-octanoyl-L-lysyl-[protein] + 2 oxidized [2Fe-2S]-[ferredoxin] + 2 S-adenosyl-L-methionine + 4 H(+) = [[Fe-S] cluster scaffold protein] + N(6)-[(R)-dihydrolipoyl]-L-lysyl-[protein] + 4 Fe(3+) + 2 hydrogen sulfide + 2 5'-deoxyadenosine + 2 L-methionine + 2 reduced [2Fe-2S]-[ferredoxin]. It functions in the pathway protein modification; protein lipoylation via endogenous pathway; protein N(6)-(lipoyl)lysine from octanoyl-[acyl-carrier-protein]: step 2/2. In terms of biological role, catalyzes the radical-mediated insertion of two sulfur atoms into the C-6 and C-8 positions of the octanoyl moiety bound to the lipoyl domains of lipoate-dependent enzymes, thereby converting the octanoylated domains into lipoylated derivatives. This chain is Lipoyl synthase, found in Geotalea daltonii (strain DSM 22248 / JCM 15807 / FRC-32) (Geobacter daltonii).